Reading from the N-terminus, the 124-residue chain is Period circadian protein (124 aa).

The disordered stretch occupies residues 30–124 (TAPVELDPPK…TVTLTESLLN (95 aa)). A compositionally biased stretch (low complexity) spans 71–96 (SGNFTTGSNVRMSSVTNTSNAGTGTS). Over residues 97-107 (SAGGNGNGGSG) the composition is skewed to gly residues.

Forms a heterodimer with timeless (TIM); the complex then translocates into the nucleus. Post-translationally, phosphorylated with a circadian rhythmicity, probably by the double-time protein (dbt). Phosphorylation could be implicated in the stability of per monomer and in the formation of heterodimer per-tim.

It is found in the nucleus. The protein localises to the cytoplasm. Its subcellular location is the perinuclear region. In terms of biological role, essential for biological clock functions. Determines the period length of circadian and ultradian rhythms; an increase in PER dosage leads to shortened circadian rhythms and a decrease leads to lengthened circadian rhythms. Essential for the circadian rhythmicity of locomotor activity, eclosion behavior, and for the rhythmic component of the male courtship song that originates in the thoracic nervous system. The biological cycle depends on the rhythmic formation and nuclear localization of the TIM-PER complex. Light induces the degradation of TIM, which promotes elimination of PER. Nuclear activity of the heterodimer coordinatively regulates PER and TIM transcription through a negative feedback loop. Behaves as a negative element in circadian transcriptional loop. Does not appear to bind DNA, suggesting indirect transcriptional inhibition. This is Period circadian protein (per) from Hirtodrosophila pictiventris (Fruit fly).